Here is a 125-residue protein sequence, read N- to C-terminus: Natriuretic peptide GNP1 (125 aa).

The N-terminal stretch at 1 to 25 (MDPRLVRAGSLVLLLALLVQDQGAA) is a signal peptide. Disordered regions lie at residues 23 to 78 (GAAH…PAFK) and 105 to 125 (VSGM…TGKK). Residues 26-85 (HPARAGQKYKPLIRRSEEDSQALGQEGDVAARAADEEEDAAGPGDALRQPAFKTLLASRE) constitute a propeptide that is removed on maturation. The cysteines at positions 94 and 110 are disulfide-linked.

This sequence belongs to the natriuretic peptide family. Expressed by the venom gland.

The protein resides in the secreted. Functionally, exhibits natriuretic and vasodepressor activity. Acts by stimulating cGMP. The polypeptide is Natriuretic peptide GNP1 (Varanus varius (Lace monitor lizard)).